Here is a 108-residue protein sequence, read N- to C-terminus: Urease subunit beta (108 aa).

It belongs to the urease beta subunit family. As to quaternary structure, probable heterotrimer of UreA (gamma), UreB (beta) and UreC (alpha) subunits. Three heterotrimers associate to form the active enzyme. The trimeric urease interacts with an accessory complex composed of UreD, UreF and UreG, which is required for the assembly of the nickel containing metallocenter of UreC. The UreE protein may also play a direct role in nickel transfer to the urease apoprotein.

The protein resides in the cytoplasm. It catalyses the reaction urea + 2 H2O + H(+) = hydrogencarbonate + 2 NH4(+). It participates in nitrogen metabolism; urea degradation; CO(2) and NH(3) from urea (urease route): step 1/1. The protein is Urease subunit beta of Proteus mirabilis (strain HI4320).